A 437-amino-acid polypeptide reads, in one-letter code: Glutamyl-tRNA reductase (437 aa).

Substrate contacts are provided by residues 49 to 52, Ser109, 114 to 116, and Gln120; these read TCNR and ETQ. Cys50 functions as the Nucleophile in the catalytic mechanism. Residue 189 to 194 coordinates NADP(+); it reads GAGKMS.

It belongs to the glutamyl-tRNA reductase family. As to quaternary structure, homodimer.

The enzyme catalyses (S)-4-amino-5-oxopentanoate + tRNA(Glu) + NADP(+) = L-glutamyl-tRNA(Glu) + NADPH + H(+). Its pathway is porphyrin-containing compound metabolism; protoporphyrin-IX biosynthesis; 5-aminolevulinate from L-glutamyl-tRNA(Glu): step 1/2. Functionally, catalyzes the NADPH-dependent reduction of glutamyl-tRNA(Glu) to glutamate 1-semialdehyde (GSA). The protein is Glutamyl-tRNA reductase of Paenibacillus macerans (Bacillus macerans).